Here is a 171-residue protein sequence, read N- to C-terminus: Cytochrome c oxidase subunit 5b-2, mitochondrial (171 aa).

A mitochondrion-targeting transit peptide spans 1 to 54; it reads MWRRIVSSHLKSISAVGSCAAPSCRHAVVESTHLSLSTRASSIPAYSSIFSRLI. Cys-121, Cys-145, and Cys-148 together coordinate Zn(2+).

It belongs to the cytochrome c oxidase subunit 5B (TC 3.D.4.11) family.

The protein resides in the mitochondrion inner membrane. In terms of biological role, this protein is one of the nuclear-coded polypeptide chains of cytochrome c oxidase, the terminal oxidase in mitochondrial electron transport. In Arabidopsis thaliana (Mouse-ear cress), this protein is Cytochrome c oxidase subunit 5b-2, mitochondrial (COX5B-2).